We begin with the raw amino-acid sequence, 349 residues long: tRNA pseudouridine synthase D (349 aa).

Substrate is bound at residue Phe26. The active-site Nucleophile is Asp79. Position 128 (Asn128) interacts with substrate. The TRUD domain maps to Gly154 to Leu302. Phe328 lines the substrate pocket.

Belongs to the pseudouridine synthase TruD family.

It catalyses the reaction uridine(13) in tRNA = pseudouridine(13) in tRNA. In terms of biological role, responsible for synthesis of pseudouridine from uracil-13 in transfer RNAs. The polypeptide is tRNA pseudouridine synthase D (Yersinia pestis bv. Antiqua (strain Antiqua)).